Reading from the N-terminus, the 291-residue chain is Beta-lactamase CTX-M-1 (291 aa).

An N-terminal signal peptide occupies residues 1–28 (MVKKSLRQFTLMATATVTLLLGSVPLYA). Residue Ser-73 is the Nucleophile; acyl-ester intermediate of the active site. A beta-lactam is bound by residues Lys-76, Ser-133, Glu-169, and Ser-240. Glu-169 serves as the catalytic Proton acceptor.

It belongs to the class-A beta-lactamase family. In terms of assembly, monomer.

It is found in the secreted. The catalysed reaction is a beta-lactam + H2O = a substituted beta-amino acid. Inhibited by the beta-lactamase-blocking agent clavulanic acid; in the TG1 strain. Its function is as follows. Extended-spectrum beta-lactamase (ESBL) which confers resistance to penicillins, as well as first, second and third-generation cephalosporins. Has cefotaxime-hydrolyzing activity. Inactive against the cephamycin antibiotic, cefoxitin, or against the carbapenem, imipenem. The sequence is that of Beta-lactamase CTX-M-1 from Escherichia coli.